The following is a 92-amino-acid chain: Cell division topological specificity factor (92 aa).

The protein belongs to the MinE family.

In terms of biological role, prevents the cell division inhibition by proteins MinC and MinD at internal division sites while permitting inhibition at polar sites. This ensures cell division at the proper site by restricting the formation of a division septum at the midpoint of the long axis of the cell. This Gluconobacter oxydans (strain 621H) (Gluconobacter suboxydans) protein is Cell division topological specificity factor.